The chain runs to 502 residues: MSLLLTLIALLVSLLLFMARRRHGYWQRRGIPHDVPHPIYGNMKDWPKKRHIAMIFRDYYTKYKRSVYPFAGFYFFFTRSAVITDLELVKRVLIKDFNHFENRGIFYNEIDDPLSATLFSIEGQKWRHLRHKLTPTFTSGKMKNMFPIIVKVGEEMEKIFSAKTTTGEGQVLEIVDLVARYTADVIGNCAFGLNCNSLQNPNAEFVTIGKRAIIERRYGGLLDFLIFGFPKLSRRLRLKLNVQDVEDFYTSIVRNTIDYRLRTNEKRHDFMDSLIEMYEKEQAGNTEDGLSFNEILAQAFIFFVAGFETSSTTMGFALYELALDQDIQDQLRAEINNVLSKHNNEFTYEGIKEMKYLEQVVMETLRKYPVLAHLTRMTQTDFSPEDPKYFIAKGTTVVIPALGIHYDPEIYPEPEKFKPERFTDEAIAARPSCTWLPFGEGPRNCIGLRFGLMQACVGLAYLIRGYKFSVSTETQIPMKFVVKSILLSAENGIHLKVEKLSK.

Cys445 contacts heme.

The protein belongs to the cytochrome P450 family. It depends on heme as a cofactor.

The protein localises to the endoplasmic reticulum membrane. The protein resides in the microsome membrane. In terms of biological role, may be involved in the metabolism of insect hormones and in the breakdown of synthetic insecticides. This chain is Probable cytochrome P450 6a23 (Cyp6a23), found in Drosophila melanogaster (Fruit fly).